Here is a 104-residue protein sequence, read N- to C-terminus: Urease subunit beta (104 aa).

This sequence belongs to the urease beta subunit family. In terms of assembly, heterotrimer of UreA (gamma), UreB (beta) and UreC (alpha) subunits. Three heterotrimers associate to form the active enzyme.

The protein localises to the cytoplasm. It carries out the reaction urea + 2 H2O + H(+) = hydrogencarbonate + 2 NH4(+). It functions in the pathway nitrogen metabolism; urea degradation; CO(2) and NH(3) from urea (urease route): step 1/1. This is Urease subunit beta from Mycolicibacterium vanbaalenii (strain DSM 7251 / JCM 13017 / BCRC 16820 / KCTC 9966 / NRRL B-24157 / PYR-1) (Mycobacterium vanbaalenii).